We begin with the raw amino-acid sequence, 635 residues long: ATP-dependent zinc metalloprotease FtsH (635 aa).

Topologically, residues 1–6 (MNNQGR) are cytoplasmic. A helical membrane pass occupies residues 7–27 (SILTWAALFVFVILLFNVFQS). The Periplasmic segment spans residues 28-103 (DGLLGGRNNI…VVPLETRMNT (76 aa)). Residues 104–124 (FLGFLISWFPMLLLIGVWVFF) traverse the membrane as a helical segment. Residues 125–635 (MRQMHGGGKA…KKAKKESTNI (511 aa)) lie on the Cytoplasmic side of the membrane. 195–202 (GPPGTGKT) contributes to the ATP binding site. Histidine 417 lines the Zn(2+) pocket. Glutamate 418 is a catalytic residue. Histidine 421 and aspartate 495 together coordinate Zn(2+). The interval 600–635 (SEEENKFPFNDSPTIKIDKEKSPEKAKKAKKESTNI) is disordered. Residues 615-635 (KIDKEKSPEKAKKAKKESTNI) show a composition bias toward basic and acidic residues.

In the central section; belongs to the AAA ATPase family. This sequence in the C-terminal section; belongs to the peptidase M41 family. Homohexamer. Zn(2+) serves as cofactor.

It localises to the cell inner membrane. Acts as a processive, ATP-dependent zinc metallopeptidase for both cytoplasmic and membrane proteins. Plays a role in the quality control of integral membrane proteins. The protein is ATP-dependent zinc metalloprotease FtsH of Rickettsia felis (strain ATCC VR-1525 / URRWXCal2) (Rickettsia azadi).